The following is a 333-amino-acid chain: Adenosine deaminase (333 aa).

Residues His12 and His14 each coordinate Zn(2+). Residues His14, Asp16, and Gly170 each contribute to the substrate site. His197 lines the Zn(2+) pocket. Glu200 (proton donor) is an active-site residue. Asp278 is a binding site for Zn(2+). Asp279 is a binding site for substrate.

Belongs to the metallo-dependent hydrolases superfamily. Adenosine and AMP deaminases family. Adenosine deaminase subfamily. It depends on Zn(2+) as a cofactor.

The catalysed reaction is adenosine + H2O + H(+) = inosine + NH4(+). It carries out the reaction 2'-deoxyadenosine + H2O + H(+) = 2'-deoxyinosine + NH4(+). Catalyzes the hydrolytic deamination of adenosine and 2-deoxyadenosine. The chain is Adenosine deaminase from Salmonella gallinarum (strain 287/91 / NCTC 13346).